Consider the following 596-residue polypeptide: Aspartate--tRNA(Asp/Asn) ligase (596 aa).

L-aspartate is bound at residue glutamate 175. The aspartate stretch occupies residues 199–202 (QMFK). Positions 221 and 451 each coordinate L-aspartate. Position 221 to 223 (221 to 223 (RDE)) interacts with ATP. Position 485 (glutamate 485) interacts with ATP. Residue arginine 492 coordinates L-aspartate. 537–540 (GVDR) serves as a coordination point for ATP.

This sequence belongs to the class-II aminoacyl-tRNA synthetase family. Type 1 subfamily. As to quaternary structure, homodimer.

It is found in the cytoplasm. It carries out the reaction tRNA(Asx) + L-aspartate + ATP = L-aspartyl-tRNA(Asx) + AMP + diphosphate. Aspartyl-tRNA synthetase with relaxed tRNA specificity since it is able to aspartylate not only its cognate tRNA(Asp) but also tRNA(Asn). Reaction proceeds in two steps: L-aspartate is first activated by ATP to form Asp-AMP and then transferred to the acceptor end of tRNA(Asp/Asn). The sequence is that of Aspartate--tRNA(Asp/Asn) ligase from Zymomonas mobilis subsp. mobilis (strain ATCC 31821 / ZM4 / CP4).